Consider the following 546-residue polypeptide: Chaperonin GroEL (546 aa).

ATP contacts are provided by residues Thr-29–Pro-32, Lys-50, Asp-86–Thr-90, Gly-414, and Asp-492.

This sequence belongs to the chaperonin (HSP60) family. As to quaternary structure, forms a cylinder of 14 subunits composed of two heptameric rings stacked back-to-back. Interacts with the co-chaperonin GroES.

It is found in the cytoplasm. It catalyses the reaction ATP + H2O + a folded polypeptide = ADP + phosphate + an unfolded polypeptide.. In terms of biological role, together with its co-chaperonin GroES, plays an essential role in assisting protein folding. The GroEL-GroES system forms a nano-cage that allows encapsulation of the non-native substrate proteins and provides a physical environment optimized to promote and accelerate protein folding. This is Chaperonin GroEL from Helicobacter acinonychis (strain Sheeba).